The chain runs to 589 residues: Probable ATP-dependent RNA helicase DDX59 (589 aa).

Disordered regions lie at residues 1–36 (MFVP…QLEG) and 48–98 (KEAV…SKTQ). The span at 12–27 (NSNDDLKSCEAKKSKP) shows a compositional bias: basic and acidic residues. K26 is covalently cross-linked (Glycyl lysine isopeptide (Lys-Gly) (interchain with G-Cter in SUMO2)). S64 is subject to Phosphoserine. The segment covering 80–91 (GVKDSHPSEEPV) has biased composition (basic and acidic residues). The HIT-type zinc-finger motif lies at 104 to 133 (GEPVCVVCGRYGEYICDKTDEDVCSLECKA). Phosphoserine occurs at positions 156 and 160. Residues 203–231 (IDFEHCGFPETLNQNLKKSGYEVPTPIQM) carry the Q motif motif. The region spanning 234–375 (IPVGLLGRDI…DQLLHNPVRI (142 aa)) is the Helicase ATP-binding domain. Residue 247-254 (ADTGSGKT) coordinates ATP. The DEAD box signature appears at 323–326 (VKAD). A Helicase C-terminal domain is found at 399-549 (KKKKLFEILN…ILPPQLLNSP (151 aa)).

The protein belongs to the DEAD box helicase family. DDX59 subfamily. As to quaternary structure, interacts (via HIT-type zinc finger) with the RUVBL1/RUVBL2 complex in the presence of ADP.

The protein localises to the cytoplasm. It is found in the nucleus. The enzyme catalyses ATP + H2O = ADP + phosphate + H(+). The polypeptide is Probable ATP-dependent RNA helicase DDX59 (Ddx59) (Rattus norvegicus (Rat)).